The following is a 162-amino-acid chain: MSQLTHINAAGEAHMVDVSGKAETVREARAEAYVEMQATTLAMIIDGSHHKGDVFATARIAGIQAAKRTWELIPLCHPLMLSKVEVNLQAQPEHNRVRIESLCRLTGKTGVEMEALTAASVAALTIYDMCKAVQKDMVIGPVRLLAKSGGKSGDFKVGECHD.

Residues 75–77 (LCH) and 113–114 (ME) each bind substrate. The active site involves aspartate 128.

It belongs to the MoaC family. As to quaternary structure, homohexamer; trimer of dimers.

It carries out the reaction (8S)-3',8-cyclo-7,8-dihydroguanosine 5'-triphosphate = cyclic pyranopterin phosphate + diphosphate. It participates in cofactor biosynthesis; molybdopterin biosynthesis. Its function is as follows. Catalyzes the conversion of (8S)-3',8-cyclo-7,8-dihydroguanosine 5'-triphosphate to cyclic pyranopterin monophosphate (cPMP). This is Cyclic pyranopterin monophosphate synthase from Klebsiella pneumoniae subsp. pneumoniae (strain ATCC 700721 / MGH 78578).